We begin with the raw amino-acid sequence, 315 residues long: Ribosomal RNA small subunit methyltransferase H (315 aa).

S-adenosyl-L-methionine contacts are provided by residues 35-37 (GGH), Asp-55, Phe-80, Asp-102, and Gln-109.

Belongs to the methyltransferase superfamily. RsmH family.

It is found in the cytoplasm. The enzyme catalyses cytidine(1402) in 16S rRNA + S-adenosyl-L-methionine = N(4)-methylcytidine(1402) in 16S rRNA + S-adenosyl-L-homocysteine + H(+). In terms of biological role, specifically methylates the N4 position of cytidine in position 1402 (C1402) of 16S rRNA. This Buchnera aphidicola subsp. Baizongia pistaciae (strain Bp) protein is Ribosomal RNA small subunit methyltransferase H.